We begin with the raw amino-acid sequence, 594 residues long: Phostensin (594 aa).

Basic and acidic residues-rich tracts occupy residues 18-33 (EEAA…RDRL) and 109-125 (VLGD…ERRS). 2 disordered regions span residues 18–238 (EEAA…PTDV) and 294–485 (VQDI…GKKR). S126, S134, S174, and S194 each carry phosphoserine. 2 stretches are compositionally biased toward basic and acidic residues: residues 133 to 155 (QSPK…DRRL) and 167 to 190 (SLRD…EAQK). Residue T198 is modified to Phosphothreonine. The residue at position 224 (S224) is a Phosphoserine. Positions 353 to 364 (EAEEEAEKEEAE) are enriched in acidic residues. A compositionally biased stretch (pro residues) spans 403 to 421 (PRPPTPAPLSPPPSAPTAP). Position 412 is a phosphoserine (S412). Residue K437 is modified to N6-acetyllysine. At S510 the chain carries Phosphoserine. The tract at residues 531-577 (YQYPSESSVLEDLGPEPETPIAPLATQPDEEEEEEEEEEELLLQPGL) is disordered. Acidic residues predominate over residues 558-571 (PDEEEEEEEEEEEL).

As to quaternary structure, interacts with Protein phosphatase 1 (PP1).

It is found in the cytoplasm. The protein resides in the cytoskeleton. In terms of biological role, may target protein phosphatase 1 to F-actin cytoskeleton. This is Phostensin (Ppp1r18) from Mus musculus (Mouse).